Consider the following 2294-residue polypeptide: Reducing polyketide synthase BOA9 (2294 aa).

The 406-residue stretch at 4–409 folds into the Ketosynthase family 3 (KS3) domain; sequence PEPVAIIGMG…GANATAIVEA (406 aa). Residues 537–853 are malonyl-CoA:ACP transacylase (MAT) domain; sequence IFTGQGAQNA…DYAATLVRGQ (317 aa). The active-site For malonyltransferase activity is S630. Residues 930-1067 form an N-terminal hotdog fold region; it reads HDLLGAILPG…GTVTKKKAVT (138 aa). The dehydratase (DH) domain stretch occupies residues 930–1104; sequence HDLLGAILPG…LNYGPAFNGL (175 aa). The region spanning 930–1236 is the PKS/mFAS DH domain; sequence HDLLGAILPG…CTQYSEALDD (307 aa). The active-site Proton acceptor; for dehydratase activity is the H962. The C-terminal hotdog fold stretch occupies residues 1078–1236; the sequence is QEPKAARTWY…CTQYSEALDD (159 aa). D1142 (proton donor; for dehydratase activity) is an active-site residue. The tract at residues 1618–1908 is enoyl reductase (ER) domain; it reads GIFDTIHFKD…KNSRIGRVVV (291 aa). The interval 1934–2107 is ketoreductase (KR) domain; it reads VHTYLLGVLE…LPATTISLTV (174 aa). The Carrier domain maps to 2214–2292; that stretch reads LLLPDILEMI…SLAKKIYDIR (79 aa). An O-(pantetheine 4'-phosphoryl)serine modification is found at S2251.

Its pathway is polyketide biosynthesis. Functionally, reducing polyketide synthase; part of the gene cluster B that mediates the biosynthesis of botcinic acid and its botcinin derivatives, acetate-derived polyketides that contribute to virulence when combined with the sesquiterpene botrydial. Botcinic acid and its derivatives have been shown to induce chlorosis and necrosis during host plant infection, but also have antifungal activities. Two polyketide synthases, BOA6 and BOA9, are involved in the biosynthesis of botcinins. BOA6 mediates the formation of the per-methylated tetraketide core by condensation of four units of malonyl-CoA with one unit of acetyl-CoA, which would be methylated in activated methylene groups to yield a bicyclic acid intermediate that could then either be converted to botrylactone derivatives or lose the starter acetate unit through a retro-Claisen type C-C bond cleavage to yield botcinin derivatives. The second polyketide synthase, BOA9, is probably required for the biosynthesis of the tetraketide side chain of botcinins. The methyltransferase (MT) domain within BOA6 is probably responsible for the incorporation of four methyl groups. The trans-enoyl reductase BOA5 might take over the enoyl reductase function of BOA6 that misses an ER domain. The monooxygenases BOA2, BOA3 and BOA4 might be involved in further hydroxylations at C4, C5 and C8, whereas BOA7, close to BOA9, could potentially be involved in the hydroxylation at C4 in the side chain of botcinins. The polypeptide is Reducing polyketide synthase BOA9 (Botryotinia fuckeliana (strain B05.10) (Noble rot fungus)).